The primary structure comprises 201 residues: Adenylyl-sulfate kinase (201 aa).

An ATP-binding site is contributed by 35-42 (GLSGSGKS). Residue serine 109 is the Phosphoserine intermediate of the active site.

This sequence belongs to the APS kinase family.

It carries out the reaction adenosine 5'-phosphosulfate + ATP = 3'-phosphoadenylyl sulfate + ADP + H(+). Its pathway is sulfur metabolism; hydrogen sulfide biosynthesis; sulfite from sulfate: step 2/3. Its function is as follows. Catalyzes the synthesis of activated sulfate. This chain is Adenylyl-sulfate kinase, found in Salmonella typhi.